We begin with the raw amino-acid sequence, 183 residues long: MIIKREMRQDKRAAPKAPINENISAREVRLIGADGEQIGIVSIDEALRIAEEAKLDLVEISADAVPPVCRVMDYGKSIFEKKKQVAAAKKNQKQIQVKEIKFRPGTEEGDYQVKLRNLVRFLSDGDRAKVSLRFRGREMAHQELGMELLKRVEGDLLEYGSVEQHPKMEGRQLIMVIAPKKKK.

This sequence belongs to the IF-3 family. As to quaternary structure, monomer.

It is found in the cytoplasm. Its function is as follows. IF-3 binds to the 30S ribosomal subunit and shifts the equilibrium between 70S ribosomes and their 50S and 30S subunits in favor of the free subunits, thus enhancing the availability of 30S subunits on which protein synthesis initiation begins. The chain is Translation initiation factor IF-3 from Pseudomonas syringae pv. tomato (strain ATCC BAA-871 / DC3000).